A 744-amino-acid chain; its full sequence is Receptor-like serine/threonine-protein kinase ALE2 (744 aa).

An N-terminal signal peptide occupies residues 1 to 19; that stretch reads MRNFAMLLLLILLLHSLAS. Residues 20–260 lie on the Extracellular side of the membrane; sequence FPICFARLFP…SQGIGFRTIA (241 aa). A compositionally biased stretch (pro residues) spans 59-68; sequence PAFSPNPSRI. Residues 59-79 are disordered; it reads PAFSPNPSRIPPLRHKGHHRH. Positions 70–79 are enriched in basic residues; it reads PLRHKGHHRH. N-linked (GlcNAc...) asparagine glycans are attached at residues Asn-87, Asn-186, Asn-204, Asn-243, and Asn-249. A helical membrane pass occupies residues 261-281; sequence IIALSGFVLILVLVGAISIIV. Residues 282-744 lie on the Cytoplasmic side of the membrane; that stretch reads KWKKIGKSSN…HLWSGNGDWL (463 aa). Residues 349–619 enclose the Protein kinase domain; sequence FSAKRVLGEG…GEVVQALKLI (271 aa). ATP contacts are provided by residues 355–363 and Lys-377; that span reads LGEGGFGRV. The active-site Proton acceptor is the Asp-470. 2 disordered regions span residues 681 to 705 and 722 to 744; these read EDME…PNRS and GSMS…GDWL.

The protein belongs to the protein kinase superfamily. Ser/Thr protein kinase family. Post-translationally, autophosphorylated and phosphorylated by ACR4.

The protein resides in the cell membrane. The enzyme catalyses L-seryl-[protein] + ATP = O-phospho-L-seryl-[protein] + ADP + H(+). The catalysed reaction is L-threonyl-[protein] + ATP = O-phospho-L-threonyl-[protein] + ADP + H(+). Its function is as follows. Required during the differentiation of the protoderm into shoots epidermis and cuticle. The chain is Receptor-like serine/threonine-protein kinase ALE2 (ALE2) from Arabidopsis thaliana (Mouse-ear cress).